The sequence spans 224 residues: Toxin coregulated pilin (224 aa).

A propeptide spans 1 to 25 (MQLLKQLFKKKFVKEEHDKKTGQEG) (atypical leader sequence). Met26 bears the N-methylmethionine mark. A helical membrane pass occupies residues 26-46 (MTLLEVIIVLGIMGVVSAGVV). Cys145 and Cys211 are oxidised to a cystine.

Its subcellular location is the fimbrium. It is found in the membrane. Major component of the toxin co-regulated pilus (tcp) which is a type IV pilus essential for bacterial aggregation and subsequent colonization in the host small intestine. The protein is Toxin coregulated pilin (tcpA) of Vibrio cholerae.